Here is a 600-residue protein sequence, read N- to C-terminus: Glutamine--fructose-6-phosphate aminotransferase [isomerizing] (600 aa).

Catalysis depends on cysteine 2, which acts as the Nucleophile; for GATase activity. A Glutamine amidotransferase type-2 domain is found at 2-217 (CGIVGYIGQL…DKEMVIVTDD (216 aa)). SIS domains follow at residues 283 to 422 (IAAA…KNGI) and 452 to 590 (IARE…VDKP). Lysine 595 acts as the For Fru-6P isomerization activity in catalysis.

As to quaternary structure, homodimer.

The protein resides in the cytoplasm. It catalyses the reaction D-fructose 6-phosphate + L-glutamine = D-glucosamine 6-phosphate + L-glutamate. Functionally, catalyzes the first step in hexosamine metabolism, converting fructose-6P into glucosamine-6P using glutamine as a nitrogen source. The protein is Glutamine--fructose-6-phosphate aminotransferase [isomerizing] of Bacillus subtilis (strain 168).